A 156-amino-acid chain; its full sequence is ATP synthase subunit b (156 aa).

The chain crosses the membrane as a helical span at residues 7-29; the sequence is LIAQAISFAILIWFTTKFVWPYL.

This sequence belongs to the ATPase B chain family. As to quaternary structure, F-type ATPases have 2 components, F(1) - the catalytic core - and F(0) - the membrane proton channel. F(1) has five subunits: alpha(3), beta(3), gamma(1), delta(1), epsilon(1). F(0) has three main subunits: a(1), b(2) and c(10-14). The alpha and beta chains form an alternating ring which encloses part of the gamma chain. F(1) is attached to F(0) by a central stalk formed by the gamma and epsilon chains, while a peripheral stalk is formed by the delta and b chains.

The protein resides in the cell inner membrane. F(1)F(0) ATP synthase produces ATP from ADP in the presence of a proton or sodium gradient. F-type ATPases consist of two structural domains, F(1) containing the extramembraneous catalytic core and F(0) containing the membrane proton channel, linked together by a central stalk and a peripheral stalk. During catalysis, ATP synthesis in the catalytic domain of F(1) is coupled via a rotary mechanism of the central stalk subunits to proton translocation. Functionally, component of the F(0) channel, it forms part of the peripheral stalk, linking F(1) to F(0). This is ATP synthase subunit b from Methylobacillus flagellatus (strain ATCC 51484 / DSM 6875 / VKM B-1610 / KT).